Reading from the N-terminus, the 276-residue chain is MADNKLHIFAVSDSVGETAEKIAVASVLQFNLDRNITRFSRVTKEEQVEKIIDQAVENDAIIIYTIVKPELSRFLDETARIKQVIAVNVMAPLFDAIQFKTGQKPEYITGLTHKMDDQYFNRMKAIEYTIEHDNGQNLDSVHEADLIVLGLPRTSKTPLSMHLANLGIKVANYPILMDTEIPQEIVDLKGRIPMVGLTIDIDTLMELRKERFRSFELPDDIETLDDLVAEELDNAYRIYAKLKCLVIDVTLDDIEEVGNTITHKFNLPLRITHHRF.

150-157 lines the ADP pocket; sequence GLPRTSKT.

The protein belongs to the pyruvate, phosphate/water dikinase regulatory protein family. PDRP subfamily.

The catalysed reaction is N(tele)-phospho-L-histidyl/L-threonyl-[pyruvate, phosphate dikinase] + ADP = N(tele)-phospho-L-histidyl/O-phospho-L-threonyl-[pyruvate, phosphate dikinase] + AMP + H(+). It catalyses the reaction N(tele)-phospho-L-histidyl/O-phospho-L-threonyl-[pyruvate, phosphate dikinase] + phosphate + H(+) = N(tele)-phospho-L-histidyl/L-threonyl-[pyruvate, phosphate dikinase] + diphosphate. Bifunctional serine/threonine kinase and phosphorylase involved in the regulation of the pyruvate, phosphate dikinase (PPDK) by catalyzing its phosphorylation/dephosphorylation. In Syntrophomonas wolfei subsp. wolfei (strain DSM 2245B / Goettingen), this protein is Putative pyruvate, phosphate dikinase regulatory protein 1.